We begin with the raw amino-acid sequence, 419 residues long: Gustatory receptor for sugar taste 64c (419 aa).

The Cytoplasmic segment spans residues M1 to H15. Residues A16–W36 traverse the membrane as a helical segment. Residues P37–W48 are Extracellular-facing. The helical transmembrane segment at I49 to L69 threads the bilayer. At S70–Y82 the chain is on the cytoplasmic side. A helical membrane pass occupies residues T83–L103. Topologically, residues S104 to R139 are extracellular. The helical transmembrane segment at L140–A160 threads the bilayer. At L161–E204 the chain is on the cytoplasmic side. The chain crosses the membrane as a helical span at residues W205 to C225. Over R226–E305 the chain is Extracellular. A helical membrane pass occupies residues L306–A326. Topologically, residues S327–R377 are cytoplasmic. The helical transmembrane segment at L378–A398 threads the bilayer. Over G399–S419 the chain is Extracellular.

Belongs to the insect chemoreceptor superfamily. Gustatory receptor (GR) family. Gr5a subfamily. As to expression, expressed in Gr5a-expressing sugar-sensing cells.

The protein localises to the cell membrane. Functionally, one of the few identified sugar gustatory receptors identified so far and which promotes the starvation-induced increase of feeding motivation. The chain is Gustatory receptor for sugar taste 64c (Gr64c) from Drosophila melanogaster (Fruit fly).